Consider the following 98-residue polypeptide: Putative pterin-4-alpha-carbinolamine dehydratase (98 aa).

The protein belongs to the pterin-4-alpha-carbinolamine dehydratase family.

The enzyme catalyses (4aS,6R)-4a-hydroxy-L-erythro-5,6,7,8-tetrahydrobiopterin = (6R)-L-erythro-6,7-dihydrobiopterin + H2O. In Mesorhizobium japonicum (strain LMG 29417 / CECT 9101 / MAFF 303099) (Mesorhizobium loti (strain MAFF 303099)), this protein is Putative pterin-4-alpha-carbinolamine dehydratase.